Reading from the N-terminus, the 432-residue chain is Homogentisate 1,2-dioxygenase (432 aa).

The active-site Proton acceptor is H286. Fe cation contacts are provided by H329 and E335. Residues Y344 and H365 each coordinate homogentisate. H365 is a binding site for Fe cation.

This sequence belongs to the homogentisate dioxygenase family. In terms of assembly, hexamer; dimer of trimers. It depends on Fe cation as a cofactor.

It carries out the reaction homogentisate + O2 = 4-maleylacetoacetate + H(+). The protein operates within amino-acid degradation; L-phenylalanine degradation; acetoacetate and fumarate from L-phenylalanine: step 4/6. Its function is as follows. Involved in the catabolism of homogentisate (2,5-dihydroxyphenylacetate or 2,5-OH-PhAc), a central intermediate in the degradation of phenylalanine and tyrosine. Catalyzes the oxidative ring cleavage of the aromatic ring of homogentisate to yield maleylacetoacetate. The protein is Homogentisate 1,2-dioxygenase of Bordetella bronchiseptica (strain ATCC BAA-588 / NCTC 13252 / RB50) (Alcaligenes bronchisepticus).